Reading from the N-terminus, the 451-residue chain is Signal transduction histidine-protein kinase ArlS (451 aa).

A run of 2 helical transmembrane segments spans residues 11–31 (IIVTTMITFVTIFLFCLIIIF) and 156–176 (IIALAFGVIATIITATISYVF). Residues 178 to 231 (TQITKPLVSLSNKMIEIRRDGFQNKLQLNTNYEEIDNLANTFNEMMSQIEESFN) enclose the HAMP domain. The region spanning 239-451 (DASHELRTPL…NKGTTFKIIF (213 aa)) is the Histidine kinase domain. Position 242 is a phosphohistidine; by autocatalysis (His242).

In terms of processing, autophosphorylated.

Its subcellular location is the cell membrane. It carries out the reaction ATP + protein L-histidine = ADP + protein N-phospho-L-histidine.. Member of the two-component regulatory system ArlS/ArlR involved in the regulation of adhesion, autolysis, multidrug resistance and virulence. ArlS probably functions as a sensor protein kinase which is autophosphorylated at a histidine residue and transfers its phosphate group to ArlR. The polypeptide is Signal transduction histidine-protein kinase ArlS (arlS) (Staphylococcus aureus (strain USA300)).